We begin with the raw amino-acid sequence, 78 residues long: Putative defensin-like protein 133 (78 aa).

An N-terminal signal peptide occupies residues M1–G24. Intrachain disulfides connect C34-C75, C44-C68, C49-C72, and C53-C74.

This sequence belongs to the DEFL family.

It is found in the secreted. In Arabidopsis thaliana (Mouse-ear cress), this protein is Putative defensin-like protein 133 (LCR33).